The primary structure comprises 200 residues: Mediator of RNA polymerase II transcription subunit 22 (200 aa).

A coiled-coil region spans residues 93 to 122 (SVNEAIDQRNQQLRALQEECDRKLITLRDE). Residues 167–200 (SAPLLASPETGAGPLQSAAPVHSHGGGPGPTEHT) are disordered. The segment covering 190 to 200 (HGGGPGPTEHT) has biased composition (gly residues).

The protein belongs to the Mediator complex subunit 22 family. As to quaternary structure, component of the Mediator complex, which is composed of MED1, MED4, MED6, MED7, MED8, MED9, MED10, MED11, MED12, MED13, MED13L, MED14, MED15, MED16, MED17, MED18, MED19, MED20, MED21, MED22, MED23, MED24, MED25, MED26, MED27, MED29, MED30, MED31, CCNC, CDK8 and CDC2L6/CDK11. The MED12, MED13, CCNC and CDK8 subunits form a distinct module termed the CDK8 module. Mediator containing the CDK8 module is less active than Mediator lacking this module in supporting transcriptional activation. Individual preparations of the Mediator complex lacking one or more distinct subunits have been variously termed ARC, CRSP, DRIP, PC2, SMCC and TRAP.

The protein localises to the nucleus. In terms of biological role, component of the Mediator complex, a coactivator involved in the regulated transcription of nearly all RNA polymerase II-dependent genes. Mediator functions as a bridge to convey information from gene-specific regulatory proteins to the basal RNA polymerase II transcription machinery. Mediator is recruited to promoters by direct interactions with regulatory proteins and serves as a scaffold for the assembly of a functional preinitiation complex with RNA polymerase II and the general transcription factors. The protein is Mediator of RNA polymerase II transcription subunit 22 (Med22) of Rattus norvegicus (Rat).